The sequence spans 227 residues: MMVSFFDQFASPSYLGIPLIAIAIALPWVLYPTSSSRWINNRLITIQGWFINRFTNQLMLPLNVGGHKWALLLASLMIFLITINMLGLLPYTFTPTTQLSLNMGFAVPLWLATVIIGMRNQPTVALGHLLPEGTPIPLIPVLIIIETISLFIRPLALGVRLTANLTAGHLLIQLIATAVFVLMPMMPTVAILTATVLFLLTLLEVAVAMIQAYVFVLLLSLYLQENV.

The next 6 membrane-spanning stretches (helical) occupy residues 9–29, 69–89, 98–118, 132–152, 165–185, and 190–210; these read FASP…LPWV, WALL…LGLL, QLSL…IIGM, EGTP…SLFI, LTAG…LMPM, and AILT…VAMI.

Belongs to the ATPase A chain family. In terms of assembly, component of the ATP synthase complex composed at least of ATP5F1A/subunit alpha, ATP5F1B/subunit beta, ATP5MC1/subunit c (homooctomer), MT-ATP6/subunit a, MT-ATP8/subunit 8, ATP5ME/subunit e, ATP5MF/subunit f, ATP5MG/subunit g, ATP5MK/subunit k, ATP5MJ/subunit j, ATP5F1C/subunit gamma, ATP5F1D/subunit delta, ATP5F1E/subunit epsilon, ATP5PF/subunit F6, ATP5PB/subunit b, ATP5PD/subunit d, ATP5PO/subunit OSCP. ATP synthase complex consists of a soluble F(1) head domain (subunits alpha(3) and beta(3)) - the catalytic core - and a membrane F(0) domain - the membrane proton channel (subunits c, a, 8, e, f, g, k and j). These two domains are linked by a central stalk (subunits gamma, delta, and epsilon) rotating inside the F1 region and a stationary peripheral stalk (subunits F6, b, d, and OSCP). Interacts with DNAJC30; interaction is direct.

It is found in the mitochondrion inner membrane. It carries out the reaction H(+)(in) = H(+)(out). Functionally, subunit a, of the mitochondrial membrane ATP synthase complex (F(1)F(0) ATP synthase or Complex V) that produces ATP from ADP in the presence of a proton gradient across the membrane which is generated by electron transport complexes of the respiratory chain. ATP synthase complex consist of a soluble F(1) head domain - the catalytic core - and a membrane F(1) domain - the membrane proton channel. These two domains are linked by a central stalk rotating inside the F(1) region and a stationary peripheral stalk. During catalysis, ATP synthesis in the catalytic domain of F(1) is coupled via a rotary mechanism of the central stalk subunits to proton translocation. With the subunit c (ATP5MC1), forms the proton-conducting channel in the F(0) domain, that contains two crucial half-channels (inlet and outlet) that facilitate proton movement from the mitochondrial intermembrane space (IMS) into the matrix. Protons are taken up via the inlet half-channel and released through the outlet half-channel, following a Grotthuss mechanism. The polypeptide is ATP synthase F(0) complex subunit a (Carassius auratus (Goldfish)).